The primary structure comprises 558 residues: MAKLLSCVLGPRLYKIYRERDSERAPASVPETPTAVTAPHSSSWDTYYQPRALEKHADSILALASVFWSISYYSSPFAFFYLYRKGYLSLSKVVPFSHYAGTLLLLLAGVACLRGIGRWTNPQYRQFITILEATHRNQSSENKRQLANYNFDFRSWPVDFHWEEPSSRKESRGGPSRRGVALLRPEPLHRGTADTLLNRVKKLPCQITSYLVAHTLGRRMLYPGSVYLLQKALMPVLLQGQARLVEECNGRRAKLLACDGNEIDTMFVDRRGTAEPQGQKLVICCEGNAGFYEVGCVSTPLEAGYSVLGWNHPGFAGSTGVPFPQNEANAMDVVVQFAIHRLGFQPQDIIIYAWSIGGFTATWAAMSYPDVSAMILDASFDDLVPLALKVMPDSWRGLVTRTVRQHLNLNNAEQLCRYQGPVLLIRRTKDEIITTTVPEDIMSNRGNDLLLKLLQHRYPRVMAEEGLRVVRQWLEASSQLEEASIYSRWEVEEDWCLSVLRSYQAEHGPDFPWSVGEDMSADGRRQLALFLARKHLHNFEATHCTPLPAQNFQMPWHL.

2 consecutive transmembrane segments (helical) span residues 60 to 80 (ILALASVFWSISYYSSPFAFF) and 93 to 113 (VVPFSHYAGTLLLLLAGVACL). The Cytoplasmic segment spans residues 114–558 (RGIGRWTNPQ…AQNFQMPWHL (445 aa)). An AB hydrolase-1 domain is found at 281 to 407 (LVICCEGNAG…LVTRTVRQHL (127 aa)). Catalysis depends on charge relay system residues Ser355, Asp430, and His507.

This sequence belongs to the AB hydrolase superfamily. ABHD16 family.

Its subcellular location is the membrane. It carries out the reaction 1-heptadecanoyl-2-(5Z,8Z,11Z,14Z-eicosatetraenoyl)-sn-glycero-3-phosphoserine + H2O = 1-heptadecanoyl-sn-glycero-3-phosphoserine + (5Z,8Z,11Z,14Z)-eicosatetraenoate + H(+). It catalyses the reaction 1-hexadecanoyl-2-(9Z-octadecenoyl)-sn-glycero-3-phospho-L-serine + H2O = 1-hexadecanoyl-sn-glycero-3-phospho-L-serine + (9Z)-octadecenoate + H(+). The catalysed reaction is 1-octadecanoyl-2-(9Z,12Z-octadecadienoyl)-sn-glycero-3-phosphoserine + H2O = 1-octadecanoyl-sn-glycero-3-phosphoserine + (9Z,12Z)-octadecadienoate + H(+). The enzyme catalyses 1-heptadecanoyl-2-(5Z,8Z,11Z,14Z-eicosatetraenoyl)-sn-glycero-3-phosphocholine + H2O = 1-heptadecanoyl-sn-glycero-3-phosphocholine + (5Z,8Z,11Z,14Z)-eicosatetraenoate + H(+). It carries out the reaction 1-hexadecanoyl-2-(9Z-octadecenoyl)-sn-glycero-3-phosphoglycerol + H2O = 1-hexadecanoyl-sn-glycero-3-phosphoglycerol + (9Z)-octadecenoate + H(+). It catalyses the reaction 1-hexadecanoyl-2-(9Z-octadecenoyl)-sn-glycero-3-phospho-(1D-myo-inositol) + H2O = 1-hexadecanoyl-sn-glycero-3-phospho-(1D-myo-inositol) + (9Z)-octadecenoate + H(+). The catalysed reaction is 1-heptadecanoyl-2-(5Z,8Z,11Z,14Z-eicosatetraenoyl)-sn-glycero-3-phosphoethanolamine + H2O = 1-heptadecanoyl-sn-glycero-3-phosphoethanolamine + (5Z,8Z,11Z,14Z)-eicosatetraenoate + H(+). The enzyme catalyses 1-hexadecanoyl-2-(9Z-octadecenoyl)-sn-glycero-3-phospho-(1'-sn-glycerol) + H2O = 1-hexadecanoyl-sn-glycero-3-phospho-(1'-sn-glycerol) + (9Z)-octadecenoate + H(+). It carries out the reaction Hydrolyzes glycerol monoesters of long-chain fatty acids.. It catalyses the reaction 1-tetradecanoylglycerol + H2O = tetradecanoate + glycerol + H(+). The catalysed reaction is 2-hexadecanoylglycerol + H2O = glycerol + hexadecanoate + H(+). The enzyme catalyses 1-(9Z-octadecenoyl)-glycerol + H2O = glycerol + (9Z)-octadecenoate + H(+). It carries out the reaction 2-(9Z-octadecenoyl)-glycerol + H2O = glycerol + (9Z)-octadecenoate + H(+). It catalyses the reaction 2-(9Z,12Z-octadecadienoyl)-glycerol + H2O = (9Z,12Z)-octadecadienoate + glycerol + H(+). The catalysed reaction is 1-(5Z,8Z,11Z,14Z-eicosatetraenoyl)-glycerol + H2O = glycerol + (5Z,8Z,11Z,14Z)-eicosatetraenoate + H(+). The enzyme catalyses 2-(5Z,8Z,11Z,14Z-eicosatetraenoyl)-glycerol + H2O = glycerol + (5Z,8Z,11Z,14Z)-eicosatetraenoate + H(+). It carries out the reaction prostaglandin D2-1-glycerol ester + H2O = prostaglandin D2 + glycerol + H(+). It catalyses the reaction 2-glyceryl-15-deoxy-Delta(12,14)-prostaglandin J2 + H2O = 15-deoxy-Delta(12,14)-prostaglandin J2 + glycerol + H(+). The catalysed reaction is 1-(9Z,12Z-octadecadienoyl)-glycerol + H2O = (9Z,12Z)-octadecadienoate + glycerol + H(+). Its activity is regulated as follows. Inhibited by beta-lactone-based lipid inhibitors, such as beta-lactone palmostatin-B. Functionally, phosphatidylserine (PS) lipase that mediates the hydrolysis of phosphatidylserine to generate lysophosphatidylserine (LPS). LPS constitutes a class of signaling lipids that regulates immunological and neurological processes. Has no activity towards diacylglycerol, triacylglycerol or lysophosphatidylserine lipase. Also has monoacylglycerol lipase activity, with preference for 1-(9Z,12Z-octadecadienoyl)-glycerol (1-LG) and 2-glyceryl-15-deoxy-Delta(12,14)-prostaglandin J2 (15d-PGJ(2)-G). In Homo sapiens (Human), this protein is Phosphatidylserine lipase ABHD16A.